Here is a 355-residue protein sequence, read N- to C-terminus: Probable tRNA-dihydrouridine synthase 1 (355 aa).

Residues 48-50 and Gln-102 contribute to the FMN site; that span reads PLS. Cys-132 (proton donor) is an active-site residue. FMN-binding positions include Lys-171, 232 to 234, and 256 to 257; these read NGD and SR.

Belongs to the Dus family. FMN serves as cofactor.

It carries out the reaction a 5,6-dihydrouridine in tRNA + NAD(+) = a uridine in tRNA + NADH + H(+). It catalyses the reaction a 5,6-dihydrouridine in tRNA + NADP(+) = a uridine in tRNA + NADPH + H(+). Functionally, catalyzes the synthesis of 5,6-dihydrouridine (D), a modified base found in the D-loop of most tRNAs, via the reduction of the C5-C6 double bond in target uridines. This Synechocystis sp. (strain ATCC 27184 / PCC 6803 / Kazusa) protein is Probable tRNA-dihydrouridine synthase 1 (dus1).